The chain runs to 334 residues: Malate dehydrogenase, cytoplasmic (334 aa).

N-acetylserine is present on Ser2. Residues 11–17 and Asp42 contribute to the NAD(+) site; that span reads GAAGQIA. Substrate is bound by residues Arg92 and Arg98. Asn105 contacts NAD(+). The residue at position 110 (Lys110) is an N6-succinyllysine. Gln112 contributes to the NAD(+) binding site. 2 positions are modified to N6-acetyllysine: Lys118 and Lys121. Position 129 to 131 (129 to 131) interacts with NAD(+); it reads VGN. 2 residues coordinate substrate: Asn131 and Arg162. The active-site Proton acceptor is His187. At Lys214 the chain carries N6-succinyllysine. Residue Ser217 is modified to Phosphoserine. Omega-N-methylarginine is present on Arg230. Ser241 carries the phosphoserine modification. Residue Lys298 is modified to N6-acetyllysine; alternate. N6-succinyllysine; alternate is present on Lys298. Position 309 is a phosphoserine (Ser309). Lys318 carries the post-translational modification N6-succinyllysine. Residues Ser332 and Ser333 each carry the phosphoserine modification.

Belongs to the LDH/MDH superfamily. MDH type 2 family. As to quaternary structure, homodimer. ISGylated. Post-translationally, acetylation at Lys-118 dramatically enhances enzymatic activity and promotes adipogenic differentiation.

Its subcellular location is the cytoplasm. It is found in the cytosol. The catalysed reaction is (S)-malate + NAD(+) = oxaloacetate + NADH + H(+). It carries out the reaction (2R)-2-hydroxy-3-(4-hydroxyphenyl)propanoate + NAD(+) = 3-(4-hydroxyphenyl)pyruvate + NADH + H(+). It catalyses the reaction (S)-2-hydroxyglutarate + NAD(+) = 2-oxoglutarate + NADH + H(+). Catalyzes the reduction of aromatic alpha-keto acids in the presence of NADH. Plays essential roles in the malate-aspartate shuttle and the tricarboxylic acid cycle, important in mitochondrial NADH supply for oxidative phosphorylation. Catalyzes the reduction of 2-oxoglutarate to 2-hydroxyglutarate, leading to elevated reactive oxygen species (ROS). This is Malate dehydrogenase, cytoplasmic (MDH1) from Felis catus (Cat).